A 343-amino-acid polypeptide reads, in one-letter code: NADH-quinone oxidoreductase subunit H (343 aa).

8 helical membrane-spanning segments follow: residues 21–41 (WTLVWTILKIAVLIAPILFCV), 95–115 (FILAPILTFSTALVSWAVVPF), 124–144 (VNVGVLFILAMSSLGAYGVLL), 172–192 (MGFTLVPVIMLSGSLNLGDIV), 197–217 (GLWYALPLLPGFFIYFISVVA), 257–277 (IIMVSVLGSLMFLGGWLPPIE), 281–301 (FIPGIVWLILKTGVLIFFFLW), and 317–337 (LGWKVFLPISLAWIFIVGLAM).

This sequence belongs to the complex I subunit 1 family. As to quaternary structure, NDH-1 is composed of 14 different subunits. Subunits NuoA, H, J, K, L, M, N constitute the membrane sector of the complex.

The protein resides in the cell inner membrane. It catalyses the reaction a quinone + NADH + 5 H(+)(in) = a quinol + NAD(+) + 4 H(+)(out). Its function is as follows. NDH-1 shuttles electrons from NADH, via FMN and iron-sulfur (Fe-S) centers, to quinones in the respiratory chain. The immediate electron acceptor for the enzyme in this species is believed to be ubiquinone. Couples the redox reaction to proton translocation (for every two electrons transferred, four hydrogen ions are translocated across the cytoplasmic membrane), and thus conserves the redox energy in a proton gradient. This subunit may bind ubiquinone. In Magnetococcus marinus (strain ATCC BAA-1437 / JCM 17883 / MC-1), this protein is NADH-quinone oxidoreductase subunit H.